Consider the following 145-residue polypeptide: D-aminoacyl-tRNA deacylase (145 aa).

The Gly-cisPro motif, important for rejection of L-amino acids signature appears at 137-138 (GP).

The protein belongs to the DTD family. In terms of assembly, homodimer.

It is found in the cytoplasm. It catalyses the reaction glycyl-tRNA(Ala) + H2O = tRNA(Ala) + glycine + H(+). It carries out the reaction a D-aminoacyl-tRNA + H2O = a tRNA + a D-alpha-amino acid + H(+). In terms of biological role, an aminoacyl-tRNA editing enzyme that deacylates mischarged D-aminoacyl-tRNAs. Also deacylates mischarged glycyl-tRNA(Ala), protecting cells against glycine mischarging by AlaRS. Acts via tRNA-based rather than protein-based catalysis; rejects L-amino acids rather than detecting D-amino acids in the active site. By recycling D-aminoacyl-tRNA to D-amino acids and free tRNA molecules, this enzyme counteracts the toxicity associated with the formation of D-aminoacyl-tRNA entities in vivo and helps enforce protein L-homochirality. The sequence is that of D-aminoacyl-tRNA deacylase from Escherichia coli O7:K1 (strain IAI39 / ExPEC).